Here is a 507-residue protein sequence, read N- to C-terminus: Myocyte-specific enhancer factor 2A (507 aa).

The MADS-box domain occupies 3–57 (RKKIQITRIMDERNRQVTFTKRKFGLMKKAYELSVLCDCEIALIIFNSSNKLFQY). Lysine 30 is subject to Phosphoserine. Residues 58–86 (ASTDMDKVLLKYTEYNEPHESRTNSDIVE) constitute a DNA-binding region (mef2-type). Serine 59 is modified (phosphoserine; by CK2). Serine 98 carries the phosphoserine modification. Positions 173–183 (TLTDSSMLSPP) are enriched in low complexity. Residues 173-229 (TLTDSSMLSPPQTTLHRNVSPGAPQRPPSTGNAGGMLSTTDLTVPNGAGSSPVGNGF) are disordered. Over residues 209–229 (LSTTDLTVPNGAGSSPVGNGF) the composition is skewed to polar residues. Serine 235 is modified (phosphoserine). A disordered region spans residues 243 to 270 (GANSLGKVMPTKSPPPPGGGNLGMNSRK). Lysine 249 carries the N6-acetyllysine modification. Position 255 is a phosphoserine; by MAPK14 (serine 255). The tract at residues 266-283 (MNSRKPDLRVVIPPSSKG) is required for interaction with MAPKs. The interval 289 to 296 (SEEEELEL) is beta domain. 2 positions are modified to phosphothreonine; by MAPK7 and MAPK14: threonine 312 and threonine 319. Threonine 312 is modified (phosphothreonine; by NLK). The residue at position 355 (serine 355) is a Phosphoserine; by MAPK7. The interval 397–507 (NQNISIKSEP…KRMRMDAWVT (111 aa)) is disordered. Lysine 403 bears the N6-acetyllysine; alternate mark. Lysine 403 is covalently cross-linked (Glycyl lysine isopeptide (Lys-Gly) (interchain with G-Cter in SUMO); alternate). Serine 408 bears the Phosphoserine; by CDK5 mark. Threonine 415 is subject to Phosphothreonine. A compositionally biased stretch (low complexity) spans 420–429 (QQQQQQQQQQ). A compositionally biased stretch (pro residues) spans 430 to 445 (QPPPPPQPQPQPPQPQ). Residue serine 453 is modified to Phosphoserine; by MAPK. Over residues 453 to 466 (SPVDSLSSSSSSYD) the composition is skewed to low complexity. 2 stretches are compositionally biased toward basic and acidic residues: residues 467–477 (GSDREDPRGDF) and 488–507 (NTEDRESPSVKRMRMDAWVT).

The protein belongs to the MEF2 family. As to quaternary structure, binds DNA as a homo- or heterodimer. Dimerizes with MEF2D. Interacts with HDAC7. Interacts with PIAS1; the interaction enhances sumoylation. Interacts with HDAC4, HDAC9 and SLC2A4RG. Interacts (via the N-terminal) with MAPK7; the interaction results in the phosphorylation and transcriptional activity of MEF2A. Post-translationally, constitutive phosphorylation on Ser-408 promotes Lys-403 sumoylation thus preventing acetylation at this site. Dephosphorylation on Ser-408 by PPP3CA upon neuron depolarization promotes a switch from sumoylation to acetylation on residue Lys-403 leading to inhibition of dendrite claw differentiation. Phosphorylation on Thr-312 and Thr-319 are the main sites involved in p38 MAPK signaling and activate transcription. Phosphorylated on these sites by MAPK14/p38alpha and MAPK11/p38beta, but not by MAPK13/p38delta nor by MAPK12/p38gamma. Phosphorylation on Ser-408 by CDK5 induced by neurotoxicity inhibits MEF2A transcriptional activation leading to apoptosis of cortical neurons. Phosphorylation on Thr-312, Thr-319 and Ser-355 can be induced by EGF. Sumoylation on Lys-403 is enhanced by PIAS1 and represses transcriptional activity. Phosphorylation on Ser-408 is required for sumoylation. Has no effect on nuclear location nor on DNA binding. Sumoylated with SUMO1 and, to a lesser extent with SUMO2 and SUMO3. PIASx facilitates sumoylation in postsynaptic dendrites in the cerebellar cortex and promotes their morphogenesis. In terms of processing, acetylation on Lys-403 activates transcriptional activity. Acetylated by p300 on several sites in diffentiating myocytes. Acetylation on Lys-4 increases DNA binding and transactivation. Hyperacetylation by p300 leads to enhanced cardiac myocyte growth and heart failure. Post-translationally, proteolytically cleaved in cerebellar granule neurons on several sites by caspase 3 and caspase 7 following neurotoxicity. Preferentially cleaves the CDK5-mediated hyperphosphorylated form which leads to neuron apoptosis and transcriptional inactivation. Isoform MEF2 and isoform MEFA are expressed only in skeletal and cardiac muscle and in the brain. Isoform RSRFC4 and isoform RSRFC9 are expressed in all tissues examined.

The protein localises to the nucleus. Its function is as follows. Transcriptional activator which binds specifically to the MEF2 element, 5'-YTA[AT](4)TAR-3', found in numerous muscle-specific genes. Also involved in the activation of numerous growth factor- and stress-induced genes. Mediates cellular functions not only in skeletal and cardiac muscle development, but also in neuronal differentiation and survival. Plays diverse roles in the control of cell growth, survival and apoptosis via p38 MAPK signaling in muscle-specific and/or growth factor-related transcription. In cerebellar granule neurons, phosphorylated and sumoylated MEF2A represses transcription of NUR77 promoting synaptic differentiation. Associates with chromatin to the ZNF16 promoter. The polypeptide is Myocyte-specific enhancer factor 2A (MEF2A) (Homo sapiens (Human)).